A 467-amino-acid polypeptide reads, in one-letter code: 3-isopropylmalate dehydratase large subunit (467 aa).

Positions 347, 408, and 411 each coordinate [4Fe-4S] cluster.

This sequence belongs to the aconitase/IPM isomerase family. LeuC type 1 subfamily. Heterodimer of LeuC and LeuD. [4Fe-4S] cluster serves as cofactor.

It catalyses the reaction (2R,3S)-3-isopropylmalate = (2S)-2-isopropylmalate. It participates in amino-acid biosynthesis; L-leucine biosynthesis; L-leucine from 3-methyl-2-oxobutanoate: step 2/4. In terms of biological role, catalyzes the isomerization between 2-isopropylmalate and 3-isopropylmalate, via the formation of 2-isopropylmaleate. This chain is 3-isopropylmalate dehydratase large subunit, found in Bordetella pertussis (strain Tohama I / ATCC BAA-589 / NCTC 13251).